The chain runs to 269 residues: Chymotrypsin-like elastase family member 2B (269 aa).

The signal sequence occupies residues 1–16 (MIRTLLLSTLVAGALS). Residues 17–28 (CGVSTYAPDMSR) constitute a propeptide, activation peptide. Residues 29 to 267 (MLGGEEARPN…YNDWINSVIA (239 aa)) form the Peptidase S1 domain. A disulfide bridge links cysteine 58 with cysteine 74. Catalysis depends on charge relay system residues histidine 73 and aspartate 121. 3 disulfides stabilise this stretch: cysteine 155-cysteine 222, cysteine 186-cysteine 202, and cysteine 212-cysteine 243. The Charge relay system role is filled by serine 216.

This sequence belongs to the peptidase S1 family. Elastase subfamily. Pancreas.

It localises to the secreted. The enzyme catalyses Preferential cleavage: Leu-|-Xaa, Met-|-Xaa and Phe-|-Xaa. Hydrolyzes elastin.. Acts upon elastin. The protein is Chymotrypsin-like elastase family member 2B (CELA2B) of Homo sapiens (Human).